We begin with the raw amino-acid sequence, 316 residues long: tRNA dimethylallyltransferase (316 aa).

17-24 (GPTASGKT) provides a ligand contact to ATP. Position 19–24 (19–24 (TASGKT)) interacts with substrate. Interaction with substrate tRNA regions lie at residues 42–45 (DSAL), 166–170 (QRLSR), 247–252 (RCVGYR), and 280–287 (KRQITWLR).

The protein belongs to the IPP transferase family. Monomer. Mg(2+) is required as a cofactor.

It carries out the reaction adenosine(37) in tRNA + dimethylallyl diphosphate = N(6)-dimethylallyladenosine(37) in tRNA + diphosphate. In terms of biological role, catalyzes the transfer of a dimethylallyl group onto the adenine at position 37 in tRNAs that read codons beginning with uridine, leading to the formation of N6-(dimethylallyl)adenosine (i(6)A). This is tRNA dimethylallyltransferase from Escherichia coli O81 (strain ED1a).